The chain runs to 127 residues: uncharacterized protein (127 aa).

Residues 5-25 (ILGITIAFIILLLTTVAILFS) form a helical membrane-spanning segment.

It is found in the membrane. This is an uncharacterized protein from Mycoplasma genitalium (strain ATCC 33530 / DSM 19775 / NCTC 10195 / G37) (Mycoplasmoides genitalium).